The chain runs to 729 residues: Polyribonucleotide nucleotidyltransferase (729 aa).

Positions 509 and 515 each coordinate Mg(2+). Residues 575 to 634 (PRVISVKIPVDKIGEVIGPKGKMINQIQADSGAEITVEDDGTIYIGAVDGPSAESARSAI) enclose the KH domain. Residues 646-718 (GERYLGTIVK…SRGKISLSPS (73 aa)) form the S1 motif domain.

It belongs to the polyribonucleotide nucleotidyltransferase family. The cofactor is Mg(2+).

The protein resides in the cytoplasm. The enzyme catalyses RNA(n+1) + phosphate = RNA(n) + a ribonucleoside 5'-diphosphate. Functionally, involved in mRNA degradation. Catalyzes the phosphorolysis of single-stranded polyribonucleotides processively in the 3'- to 5'-direction. This chain is Polyribonucleotide nucleotidyltransferase, found in Frankia casuarinae (strain DSM 45818 / CECT 9043 / HFP020203 / CcI3).